Reading from the N-terminus, the 730-residue chain is MTENKCPVTGKMSKATAGSGTTNKDWWPNQLNLNILHQNSQLSNPMSKDFNYAEEFKKLDFQALKVDLYMLMTDSQIWWPADYGNYGPFFIRMAWHSAGTYRVGDGRGGGSFGLQRFAPLNSWPDNINLDKARRLLWPIKKKYGNKISWADLMILTGNCALESMGLKTLGFGGGRVDVWEPQEDIYWGSEKEWLGDEREKDDEELENPLAAVQMGLIYVNPEGPNGNPDPLGSAHDVRETFARMAMNDEETVALVAGGHTFGKCHGAASPSYVGPAPEAAPIEEQGLGWKNTYGSGNGDDTIGSGLEGAWKANPTKWTMGYLKTLFKYDWELVKSPAGAYQWLAKNVDEEDMVIDAEDSTKKHRPMMTTADLGLRYDPIYEPIARNYLKNPEKFAHDFAAAWFKLTHRDMGPISRYLGPEVPKESFIWQDPIPLVKHKLITKKDITHIKKKILDSGLSISDLVATAWASASTFRGSDKRGGANGARIRLEPQKNWEVNEPKKLNNVLNTLKQIKENFNSYHSKDKKVSLADIIILGGCVGIEQAAKRAGYNINVPFIPGRTDATQKQTDVKSFAVLEPKGDGFRNYLKTKYVVKPEDMLIDRAQLLTLTAPEMTVLIGGMRVLNCNYNKSKDGVFTNRPECLTNDFFVNLLDMNTVWKPKSEGKDRFEGFDRETGELKWTATRVDLIFGSNSQLRAIAEVYACDDNKEKFIQDFIFAWNKIMNADRFEIK.

Residues 1 to 21 (MTENKCPVTGKMSKATAGSGT) are disordered. A cross-link (tryptophyl-tyrosyl-methioninium (Trp-Tyr) (with M-244)) is located at residues 95 to 218 (WHSAGTYRVG…LAAVQMGLIY (124 aa)). Residue histidine 96 is the Proton acceptor of the active site. Positions 218–244 (YVNPEGPNGNPDPLGSAHDVRETFARM) form a cross-link, tryptophyl-tyrosyl-methioninium (Tyr-Met) (with W-95). Histidine 259 contacts heme b.

Belongs to the peroxidase family. Peroxidase/catalase subfamily. As to quaternary structure, homodimer or homotetramer. The cofactor is heme b. Post-translationally, formation of the three residue Trp-Tyr-Met cross-link is important for the catalase, but not the peroxidase activity of the enzyme.

It carries out the reaction H2O2 + AH2 = A + 2 H2O. It catalyses the reaction 2 H2O2 = O2 + 2 H2O. Functionally, bifunctional enzyme with both catalase and broad-spectrum peroxidase activity. This is Catalase-peroxidase from Clostridium botulinum (strain Alaska E43 / Type E3).